A 349-amino-acid polypeptide reads, in one-letter code: Phenylalanine--tRNA ligase alpha subunit (349 aa).

Glu-259 is a binding site for Mg(2+).

Belongs to the class-II aminoacyl-tRNA synthetase family. Phe-tRNA synthetase alpha subunit type 1 subfamily. Tetramer of two alpha and two beta subunits. Requires Mg(2+) as cofactor.

Its subcellular location is the cytoplasm. It carries out the reaction tRNA(Phe) + L-phenylalanine + ATP = L-phenylalanyl-tRNA(Phe) + AMP + diphosphate + H(+). The polypeptide is Phenylalanine--tRNA ligase alpha subunit (Lactobacillus acidophilus (strain ATCC 700396 / NCK56 / N2 / NCFM)).